The chain runs to 196 residues: dTTP/UTP pyrophosphatase (196 aa).

D72 serves as the catalytic Proton acceptor.

The protein belongs to the Maf family. YhdE subfamily. A divalent metal cation serves as cofactor.

Its subcellular location is the cytoplasm. The enzyme catalyses dTTP + H2O = dTMP + diphosphate + H(+). The catalysed reaction is UTP + H2O = UMP + diphosphate + H(+). Functionally, nucleoside triphosphate pyrophosphatase that hydrolyzes dTTP and UTP. May have a dual role in cell division arrest and in preventing the incorporation of modified nucleotides into cellular nucleic acids. The protein is dTTP/UTP pyrophosphatase of Chlamydia trachomatis serovar A (strain ATCC VR-571B / DSM 19440 / HAR-13).